The chain runs to 120 residues: MLKFTEEHEWLQIEGSVATVGITNYAVDQLGDLVFVELPEVGATFSKNGNAATVESVKAASDVYCPLDGEITEVNPAIVADPSLVNSDPQGAGWFFKLKLANPADADGLLDEAAYKELTA.

The Lipoyl-binding domain occupies 17–99 (VATVGITNYA…QGAGWFFKLK (83 aa)). Lys58 is modified (N6-lipoyllysine).

This sequence belongs to the GcvH family. In terms of assembly, the glycine cleavage system is composed of four proteins: P, T, L and H. Requires (R)-lipoate as cofactor.

Functionally, the glycine cleavage system catalyzes the degradation of glycine. The H protein shuttles the methylamine group of glycine from the P protein to the T protein. In Rhizobium leguminosarum bv. trifolii (strain WSM2304), this protein is Glycine cleavage system H protein.